Here is a 262-residue protein sequence, read N- to C-terminus: Acyl-[acyl-carrier-protein]--UDP-N-acetylglucosamine O-acyltransferase (262 aa).

Belongs to the transferase hexapeptide repeat family. LpxA subfamily. Homotrimer.

The protein resides in the cytoplasm. It carries out the reaction a (3R)-hydroxyacyl-[ACP] + UDP-N-acetyl-alpha-D-glucosamine = a UDP-3-O-[(3R)-3-hydroxyacyl]-N-acetyl-alpha-D-glucosamine + holo-[ACP]. Its pathway is glycolipid biosynthesis; lipid IV(A) biosynthesis; lipid IV(A) from (3R)-3-hydroxytetradecanoyl-[acyl-carrier-protein] and UDP-N-acetyl-alpha-D-glucosamine: step 1/6. Its function is as follows. Involved in the biosynthesis of lipid A, a phosphorylated glycolipid that anchors the lipopolysaccharide to the outer membrane of the cell. This chain is Acyl-[acyl-carrier-protein]--UDP-N-acetylglucosamine O-acyltransferase, found in Paraburkholderia phymatum (strain DSM 17167 / CIP 108236 / LMG 21445 / STM815) (Burkholderia phymatum).